A 374-amino-acid polypeptide reads, in one-letter code: Ribosomal RNA large subunit methyltransferase G (374 aa).

It belongs to the methyltransferase superfamily. RlmG family.

The protein localises to the cytoplasm. It catalyses the reaction guanosine(1835) in 23S rRNA + S-adenosyl-L-methionine = N(2)-methylguanosine(1835) in 23S rRNA + S-adenosyl-L-homocysteine + H(+). Functionally, specifically methylates the guanine in position 1835 (m2G1835) of 23S rRNA. The protein is Ribosomal RNA large subunit methyltransferase G of Pseudomonas aeruginosa (strain UCBPP-PA14).